Consider the following 101-residue polypeptide: Small ribosomal subunit protein uS14 (101 aa).

This sequence belongs to the universal ribosomal protein uS14 family. In terms of assembly, part of the 30S ribosomal subunit. Contacts proteins S3 and S10.

Its function is as follows. Binds 16S rRNA, required for the assembly of 30S particles and may also be responsible for determining the conformation of the 16S rRNA at the A site. This chain is Small ribosomal subunit protein uS14, found in Baumannia cicadellinicola subsp. Homalodisca coagulata.